The following is a 97-amino-acid chain: Protein YukE (97 aa).

Residues valine 21 to glutamine 94 are a coiled coil.

This sequence belongs to the WXG100 family. sagEsxA-like subfamily. As to quaternary structure, homodimer.

The protein resides in the secreted. Its function is as follows. Required to deliver LXG toxins to target cells. The chain is Protein YukE (yukE) from Bacillus subtilis (strain 168).